A 210-amino-acid polypeptide reads, in one-letter code: Calcineurin B-like protein 4 (210 aa).

A lipid anchor (N-myristoyl glycine) is attached at glycine 2. EF-hand domains follow at residues 31-66 (EVEALRELYNKMSYSIIKDGLIHKEEFQLALFRNSR), 67-102 (KANLFADRVFDLFDLKRNGVIEFGEFVRSLSVFHPK), 104-139 (PKSEKTAFAFKLYDLRGTGYIEKEELREMVLALLDE), and 148-183 (AVEAIVDNTFSQADSNGDGRIDPEEWEEFVKANPAS). Ca(2+)-binding residues include aspartate 161, asparagine 163, aspartate 165, arginine 167, and glutamate 172.

It belongs to the calcineurin regulatory subunit family. Homodimer. Interacts with CIPK24. In terms of tissue distribution, expressed in leaves.

The protein localises to the cell membrane. Its function is as follows. Acts as a calcium sensor involved in the regulatory pathway for the control of intracellular Na(+) and K(+) homeostasis and salt tolerance. Operates in synergy with CIPK24 to activate the plasma membrane Na(+)/H(+) antiporter SOS1. May function as positive regulator of salt stress responses. CBL proteins interact with CIPK serine-threonine protein kinases. Binding of a CBL protein to the regulatory NAF domain of a CIPK protein lead to the activation of the kinase in a calcium-dependent manner. This is Calcineurin B-like protein 4 (CBL4) from Oryza sativa subsp. japonica (Rice).